A 20-amino-acid chain; its full sequence is Mu-conotoxin SIIIB (20 aa).

At glutamine 1 the chain carries Pyrrolidone carboxylic acid. 3 disulfide bridges follow: cysteine 3/cysteine 13, cysteine 4/cysteine 19, and cysteine 8/cysteine 20. Residue cysteine 20 is modified to Cysteine amide.

In terms of tissue distribution, expressed by the venom duct.

It localises to the secreted. Its function is as follows. Mu-conotoxins block voltage-gated sodium channels (VGSC). Potently displaces (125)I-TIIIA from native rat brain Nav1.2/SCN2A (IC(50) is 5 nM) and muscle Nav1.4/SCN4A (IC(50) is 3 nM) VGSCs. Potently and irreversibly inhibits current through Xenopus oocyte-expressed Nav1.2/SCN2A and Nav1.4/SCN4A. This chain is Mu-conotoxin SIIIB, found in Conus striatus (Striated cone).